The chain runs to 698 residues: Zinc finger CCCH domain-containing protein 7 (698 aa).

Residues Met-1–Ala-11 show a composition bias toward pro residues. 4 disordered regions span residues Met-1–Thr-23, His-56–Arg-95, Ala-109–Thr-137, and Gly-272–Ser-300. Low complexity-rich tracts occupy residues Ala-12–Pro-21 and Glu-65–Pro-74. The span at Glu-281–Ser-300 shows a compositional bias: acidic residues. 3 consecutive C3H1-type zinc fingers follow at residues Pro-429 to Thr-456, Leu-458 to Ser-485, and Lys-486 to Pro-511. Disordered regions lie at residues Thr-512–Ala-553 and Thr-607–Val-682. 2 stretches are compositionally biased toward polar residues: residues Cys-535–Tyr-548 and Ser-665–His-680.

The chain is Zinc finger CCCH domain-containing protein 7 from Oryza sativa subsp. japonica (Rice).